A 461-amino-acid polypeptide reads, in one-letter code: Carbamoyl phosphate synthase arginine-specific small chain (461 aa).

The region spanning 240–427 (HVALIDCGVK…LENVQMYKDN (188 aa)) is the Glutamine amidotransferase type-1 domain. Cys316 acts as the Nucleophile in catalysis. Residues His400 and Glu402 contribute to the active site.

Belongs to the CarA family. In terms of assembly, heterodimer composed of 2 chains; the small (or glutamine) chain promotes the hydrolysis of glutamine to ammonia, which is used by the large (or ammonia) chain to synthesize carbamoyl phosphate.

The protein localises to the cytoplasm. The catalysed reaction is hydrogencarbonate + L-glutamine + 2 ATP + H2O = carbamoyl phosphate + L-glutamate + 2 ADP + phosphate + 2 H(+). It carries out the reaction L-glutamine + H2O = L-glutamate + NH4(+). Its pathway is amino-acid biosynthesis; L-arginine biosynthesis; carbamoyl phosphate from bicarbonate: step 1/1. In terms of biological role, small subunit of the arginine-specific carbamoyl phosphate synthase (CPSase). CPSase catalyzes the formation of carbamoyl phosphate from the ammonia moiety of glutamine, carbonate, and phosphate donated by ATP, constituting the first step of 2 biosynthetic pathways, one leading to arginine and/or urea and the other to pyrimidine nucleotides. The small subunit (glutamine amidotransferase) binds and cleaves glutamine to supply the large subunit with the substrate ammonia. The sequence is that of Carbamoyl phosphate synthase arginine-specific small chain (CPA1) from Chaetomium globosum (strain ATCC 6205 / CBS 148.51 / DSM 1962 / NBRC 6347 / NRRL 1970) (Soil fungus).